Reading from the N-terminus, the 392-residue chain is Succinate--CoA ligase [ADP-forming] subunit beta (392 aa).

In terms of domain architecture, ATP-grasp spans 9 to 248 (KDILRKFGVA…ISEEDPFEVE (240 aa)). ATP contacts are provided by residues Lys50, 57–59 (GRG), Glu103, Met106, and Glu111. Mg(2+) is bound by residues Asn203 and Asp217. Substrate is bound by residues Asn268 and 325–327 (GIV).

This sequence belongs to the succinate/malate CoA ligase beta subunit family. As to quaternary structure, heterotetramer of two alpha and two beta subunits. Requires Mg(2+) as cofactor.

The catalysed reaction is succinate + ATP + CoA = succinyl-CoA + ADP + phosphate. It carries out the reaction GTP + succinate + CoA = succinyl-CoA + GDP + phosphate. It functions in the pathway carbohydrate metabolism; tricarboxylic acid cycle; succinate from succinyl-CoA (ligase route): step 1/1. In terms of biological role, succinyl-CoA synthetase functions in the citric acid cycle (TCA), coupling the hydrolysis of succinyl-CoA to the synthesis of either ATP or GTP and thus represents the only step of substrate-level phosphorylation in the TCA. The beta subunit provides nucleotide specificity of the enzyme and binds the substrate succinate, while the binding sites for coenzyme A and phosphate are found in the alpha subunit. The protein is Succinate--CoA ligase [ADP-forming] subunit beta of Chlorobium phaeobacteroides (strain DSM 266 / SMG 266 / 2430).